We begin with the raw amino-acid sequence, 515 residues long: Glucose-6-phosphate 1-dehydrogenase (515 aa).

Ala-2 bears the N-acetylalanine mark. Residue Ser-8 is modified to Phosphoserine. Thr-10 carries the post-translational modification Phosphothreonine. Residues 38-45 and Arg-72 contribute to the NADP(+) site; that span reads GASGDLAK. Residue Lys-89 is modified to N6-acetyllysine. NADP(+) is bound by residues Tyr-147 and Lys-171. Residues Lys-171, 201-205, Glu-239, and Asp-258 each bind D-glucose 6-phosphate; that span reads HYLGK. An N6-(2-hydroxyisobutyryl)lysine; alternate modification is found at Lys-171. N6-acetyllysine; alternate is present on Lys-171. The Proton acceptor role is filled by His-263. Arg-357 provides a ligand contact to NADP(+). Positions 360 and 365 each coordinate D-glucose 6-phosphate. NADP(+)-binding residues include Lys-366, Arg-370, and Arg-393. Gln-395 is a binding site for D-glucose 6-phosphate. NADP(+) contacts are provided by residues 401-403 and 421-423; these read YTK and DLT. At Lys-403 the chain carries N6-acetyllysine. Lys-432 bears the N6-acetyllysine mark. Position 487 (Arg-487) interacts with NADP(+). Position 497 is an N6-acetyllysine (Lys-497). 2 residues coordinate NADP(+): Tyr-503 and Trp-509. Tyr-503 is modified (phosphotyrosine).

It belongs to the glucose-6-phosphate dehydrogenase family. In terms of assembly, homotetramer; dimer of dimers. Interacts with SIRT2; the interaction is enhanced by H(2)O(2) treatment. Forms a ternary complex with ALDOB and TP53; this interaction is direct. ALDOB stabilizes the complex inhibiting G6PD activity and keeping oxidative pentose phosphate metabolism in check. Post-translationally, acetylated by ELP3 at Lys-403; acetylation inhibits its homodimerization and enzyme activity. Deacetylated by SIRT2 at Lys-403; deacetylation stimulates its enzyme activity.

Its subcellular location is the cytoplasm. The protein localises to the cytosol. The protein resides in the membrane. It catalyses the reaction D-glucose 6-phosphate + NADP(+) = 6-phospho-D-glucono-1,5-lactone + NADPH + H(+). It participates in carbohydrate degradation; pentose phosphate pathway; D-ribulose 5-phosphate from D-glucose 6-phosphate (oxidative stage): step 1/3. Cytosolic glucose-6-phosphate dehydrogenase that catalyzes the first and rate-limiting step of the oxidative branch within the pentose phosphate pathway/shunt, an alternative route to glycolysis for the dissimilation of carbohydrates and a major source of reducing power and metabolic intermediates for fatty acid and nucleic acid biosynthetic processes. The chain is Glucose-6-phosphate 1-dehydrogenase (G6PD) from Cricetulus griseus (Chinese hamster).